The primary structure comprises 284 residues: Tropomyosin (284 aa).

Positions 1–284 (MDAIKKKMLM…DQALNELHNM (284 aa)) form a coiled coil. 2 disordered regions span residues 106 to 134 (LNST…ENRQ) and 186 to 221 (AETK…EEAY). Basic and acidic residues-rich tracts occupy residues 112-134 (KLTD…ENRQ) and 186-198 (AETK…DELK).

This sequence belongs to the tropomyosin family. In terms of assembly, homodimer.

Its function is as follows. Tropomyosin, in association with the troponin complex, plays a central role in the calcium dependent regulation of muscle contraction. In Branchiostoma belcheri (Amphioxus), this protein is Tropomyosin (TPM).